The chain runs to 610 residues: Phragmoplastin DRP1A (610 aa).

At M1 the chain carries N-acetylmethionine. Residues 31–300 (WDSLPAIAVV…LERVIKSRIP (270 aa)) form the Dynamin-type G domain. Positions 41 to 48 (GGQSSGKS) are G1 motif. 44 to 49 (SSGKSS) contributes to the GTP binding site. The tract at residues 67-69 (VTR) is G2 motif. The tract at residues 142–145 (DLPG) is G3 motif. Residues 211–214 (TKID) are G4 motif. GTP contacts are provided by residues 212–217 (KIDLMD) and 242–245 (NRSQ). A G5 motif region spans residues 241-244 (VNRS). In terms of domain architecture, GED spans 518-610 (LRRIGSNVLS…SEIDAVAWSK (93 aa)).

This sequence belongs to the TRAFAC class dynamin-like GTPase superfamily. Dynamin/Fzo/YdjA family. Forms homodimer and may homooligomerize and heterooligomerize to form the phragmoplastin complex. Interacts with AGD3/VAN3. May interact with CALS1. Binds to AHK2. Binds to SH3P2. Forms a complex made of SH3P2 and DRP1A and triggers its accumulation at the cell plate. Interacts with DRP2B at the plasma membrane and in forming clathrin-coated vesicles (CCV). Binds to PHIP1. In terms of tissue distribution, ubiquitous. Expressed in leaves (at protein level).

The protein localises to the cytoplasm. It localises to the cytoskeleton. Its subcellular location is the phragmoplast. The protein resides in the cell cortex. It is found in the cytoplasmic vesicle. The protein localises to the clathrin-coated vesicle. It localises to the cell membrane. It catalyses the reaction GTP + H2O = GDP + phosphate + H(+). Functionally, microtubule-associated force-producing protein that is targeted to at the leading edges of the forming cell plate during cytokinesis. Also plays a major role in plasma membrane maintenance and cell wall integrity with implications in vesicular trafficking, polar cell expansion, vascular formation, and other aspects of plant growth and development, including stigmatic papillae expansion. Collaboratively with DRP2B, participates in clathrin-coated vesicle formation during endocytosis. Necessary for BOR1 polar localization in low-boron (B) conditions as well as for BOR1 endocytosis and subsequent degradation under high-concentration of boron. Has a GTPase activity. Required for the sterols-dependent dynamic high lipid order observed at the cell plate of dividing cells. Together with SH3P2, converts the fused vesicles to tubular structures at the cell plate and phragmoplasts during cytokinesis. With DRP2B and PIP5K3, required for the precise coordination of polar ARAC3/ROP6 and ARAC4/ROP2 placement and subsequent root hair positioning during planar polarity formation in root hair-forming cells, probably by mediating the correct basal-to-planar polarity switching of D6PK into the polar, lipid-enriched domain. Involved in endocytosis required for cellulose deposition during cell wall formation and elongation. Interacts with plasma membrane-mimetic liposomes and induces their clustering. The chain is Phragmoplastin DRP1A from Arabidopsis thaliana (Mouse-ear cress).